The sequence spans 103 residues: Co-chaperonin GroES (103 aa).

This sequence belongs to the GroES chaperonin family. Heptamer of 7 subunits arranged in a ring. Interacts with the chaperonin GroEL.

Its subcellular location is the cytoplasm. Its function is as follows. Together with the chaperonin GroEL, plays an essential role in assisting protein folding. The GroEL-GroES system forms a nano-cage that allows encapsulation of the non-native substrate proteins and provides a physical environment optimized to promote and accelerate protein folding. GroES binds to the apical surface of the GroEL ring, thereby capping the opening of the GroEL channel. This chain is Co-chaperonin GroES, found in Prochlorococcus marinus (strain MIT 9215).